A 202-amino-acid polypeptide reads, in one-letter code: Transmembrane protein 223 (202 aa).

Residues 1 to 43 are Mitochondrial matrix-facing; sequence MAAPWRRWPTGLLAVLRPLLTCRPLQGTTLQRDVLLFEHDRGR. A helical transmembrane segment spans residues 44 to 64; the sequence is FFTILGLFCAGQGVFWASMAV. Topologically, residues 65-97 are mitochondrial intermembrane; it reads AAVSRPPVPVQPLDAEVPNRGPFDLRSALWRYG. The chain crosses the membrane as a helical span at residues 98-118; that stretch reads LAVGCGAIGALVLGAGLLFSL. Residues 119-202 lie on the Mitochondrial matrix side of the membrane; it reads RSVRSVVLRA…DNTVGAYRSL (84 aa).

It belongs to the TMEM223 family. As to quaternary structure, associates with the mitochondrial ribosome.

The protein resides in the mitochondrion inner membrane. Mitochondrial ribosome-associated protein involved in the first steps of cytochrome c oxidase complex (complex IV) biogenesis. Stimulates the translation of MT-CO1 mRNA and is a constituent of early MT-CO1 assembly intermediates. This Homo sapiens (Human) protein is Transmembrane protein 223.